A 507-amino-acid chain; its full sequence is Blue light receptor lreB (507 aa).

The PAS domain maps to 170-234 (RVLNEMKDML…EEMNECITTT (65 aa)). Residues 463 to 488 (CTDCGTSDSPEWRKGPEGPKTLCNAC) form a GATA-type zinc finger.

Probable transcription factor involved in light regulation. Plays crucial roles in fungal growth and asexual development. Involved in conidiophore formation, sclerotium production, and conidial stress tolerance. Positively regulates the fungal pathogenicity towards maize and aflatoxin B1 production. The polypeptide is Blue light receptor lreB (Aspergillus flavus).